Reading from the N-terminus, the 389-residue chain is Lipid-A-disaccharide synthase (389 aa).

It belongs to the LpxB family.

The catalysed reaction is a lipid X + a UDP-2-N,3-O-bis[(3R)-3-hydroxyacyl]-alpha-D-glucosamine = a lipid A disaccharide + UDP + H(+). It participates in bacterial outer membrane biogenesis; LPS lipid A biosynthesis. In terms of biological role, condensation of UDP-2,3-diacylglucosamine and 2,3-diacylglucosamine-1-phosphate to form lipid A disaccharide, a precursor of lipid A, a phosphorylated glycolipid that anchors the lipopolysaccharide to the outer membrane of the cell. The polypeptide is Lipid-A-disaccharide synthase (Burkholderia lata (strain ATCC 17760 / DSM 23089 / LMG 22485 / NCIMB 9086 / R18194 / 383)).